The sequence spans 272 residues: Insulin-like growth factor-binding protein 1 (272 aa).

The signal sequence occupies residues 1 to 25 (MPEFLTVVSWPFLILLSFQVRVVAG). The 82-residue stretch at 28 to 109 (QPWHCAPCTA…TRGQGACVLE (82 aa)) folds into the IGFBP N-terminal domain. Cystine bridges form between cysteine 32/cysteine 59, cysteine 35/cysteine 61, cysteine 43/cysteine 62, cysteine 50/cysteine 65, cysteine 73/cysteine 86, and cysteine 80/cysteine 106. The interval 115-143 (TSSLSGSQHEEAKAAVASEDELAESPEMT) is disordered. A compositionally biased stretch (acidic residues) spans 132 to 143 (SEDELAESPEMT). Serine 139, serine 157, and serine 169 each carry phosphoserine. The residue at position 170 (threonine 170) is a Phosphothreonine. Tyrosine 171 carries the post-translational modification Phosphotyrosine. The region spanning 186–264 (KEPCQRELYK…SLETRGDPNC (79 aa)) is the Thyroglobulin type-1 domain. 3 cysteine pairs are disulfide-bonded: cysteine 189–cysteine 219, cysteine 230–cysteine 241, and cysteine 243–cysteine 264. Serine 255 bears the Phosphoserine mark. The short motif at 259-261 (RGD) is the Cell attachment site element.

Binds equally well IGF1 and IGF2. Interacts with integrin ITGA5:ITGB1. Interacts with VHL; this interaction inhibits HIF1A degradation.

Its subcellular location is the secreted. In terms of biological role, multifunctional protein that plays a critical role in regulating the availability of IGFs such as IGF1 and IGF2 to their receptors and thereby regulates IGF-mediated cellular processes including cell migration, proliferation, differentiation or apoptosis in a cell-type specific manner. Also plays a positive role in cell migration by interacting with integrin ITGA5:ITGB1 through its RGD motif. Mechanistically, binding to integrins leads to activation of focal adhesion kinase/PTK2 and stimulation of the mitogen-activated protein kinase (MAPK) pathway. Regulates cardiomyocyte apoptosis by suppressing HIF-1alpha/HIF1A ubiquitination and subsequent degradation. The chain is Insulin-like growth factor-binding protein 1 (Igfbp1) from Rattus norvegicus (Rat).